A 607-amino-acid polypeptide reads, in one-letter code: MTDPFDPSAFLSTCSGRPGVYRMFDSDTRLLYVGKAKNLKSRLASYFRKTGLAPKTAALVGRIAQIETTITANETEALLLEQTLIKEWRPPYNILLRDDKSYPYVFLSDGEFPRFSIHRGAKKQKGKYFGPYPSAGAIRESLSLLQKTFMVRQCEDSYYKNRTRPCLQYQIKRCKAPCVGLVEAEVYAEDVRHSVMFLEGRSNALTDELSAGMEQAASTLDFEKAAELRDQISLLRRVQDQQSMEGGSGDVDVVAAFVNPGGACVHLISVRGGRVLGSKNFFPQVGIEEEVAEVMSAFLGQYFLSSPERDLPSELIVNVVHEDFPALIAAIQELRGRELSISHRVRGTRARWQQLAVTNAEQALSARLANRQHVAARFEALAEVLNLDEPPQRLECYDISHSSGEATVASCVVFGPEGPLKSDYRRYNIEGVTAGDDYAAMHQALTRRFSKLKDGEGKLPDILLVDGGKGQLSMARDVLNELAVPDLILLGVAKGATRKTGFETLYLNDAAHEFTLKGDSPALHLIQQIRDEAHRFAITGHRARRGKTRRTSTLEDVAGVGPKRRRDLLKHFGGLQELSRASIEEIAKAPGISKKLAELIYANLHSE.

One can recognise a GIY-YIG domain in the interval 16–94 (GRPGVYRMFD…IKEWRPPYNI (79 aa)). Positions 203–238 (NALTDELSAGMEQAASTLDFEKAAELRDQISLLRRV) constitute a UVR domain.

Belongs to the UvrC family. Interacts with UvrB in an incision complex.

It localises to the cytoplasm. Functionally, the UvrABC repair system catalyzes the recognition and processing of DNA lesions. UvrC both incises the 5' and 3' sides of the lesion. The N-terminal half is responsible for the 3' incision and the C-terminal half is responsible for the 5' incision. This Pseudomonas protegens (strain DSM 19095 / LMG 27888 / CFBP 6595 / CHA0) protein is UvrABC system protein C.